The sequence spans 640 residues: Chaperone protein DnaK (640 aa).

At T199 the chain carries Phosphothreonine; by autocatalysis. Residues 603–640 (YTQQAEEPQPQKEEGKAAEEDVVDAEFEEVKEDKNKAS) are disordered. Residues 611–621 (QPQKEEGKAAE) are compositionally biased toward basic and acidic residues. Residues 622–632 (EDVVDAEFEEV) show a composition bias toward acidic residues.

This sequence belongs to the heat shock protein 70 family.

In terms of biological role, acts as a chaperone. This Nitrosococcus oceani (strain ATCC 19707 / BCRC 17464 / JCM 30415 / NCIMB 11848 / C-107) protein is Chaperone protein DnaK.